Consider the following 543-residue polypeptide: Probable protein kinase UbiB (543 aa).

Residues 123-501 (DFDQQALASA…RVRQGQSRYL (379 aa)) form the Protein kinase domain. ATP-binding positions include 129–137 (LASASIAQV) and Lys152. Catalysis depends on Asp287, which acts as the Proton acceptor. The next 2 helical transmembrane spans lie at 498 to 518 (SRYL…LLSG) and 519 to 539 (DVEV…VIGW).

Belongs to the ABC1 family. UbiB subfamily.

It localises to the cell inner membrane. Its pathway is cofactor biosynthesis; ubiquinone biosynthesis [regulation]. Functionally, is probably a protein kinase regulator of UbiI activity which is involved in aerobic coenzyme Q (ubiquinone) biosynthesis. The chain is Probable protein kinase UbiB from Serratia proteamaculans (strain 568).